Here is a 542-residue protein sequence, read N- to C-terminus: Chaperonin GroEL 3 (542 aa).

ATP is bound by residues 30–33 (TLGP), lysine 51, 87–91 (DGTTT), glycine 415, and aspartate 496.

It belongs to the chaperonin (HSP60) family. Forms a cylinder of 14 subunits composed of two heptameric rings stacked back-to-back. Interacts with the co-chaperonin GroES.

The protein localises to the cytoplasm. The enzyme catalyses ATP + H2O + a folded polypeptide = ADP + phosphate + an unfolded polypeptide.. Functionally, together with its co-chaperonin GroES, plays an essential role in assisting protein folding. The GroEL-GroES system forms a nano-cage that allows encapsulation of the non-native substrate proteins and provides a physical environment optimized to promote and accelerate protein folding. The sequence is that of Chaperonin GroEL 3 from Rhizobium johnstonii (strain DSM 114642 / LMG 32736 / 3841) (Rhizobium leguminosarum bv. viciae).